The chain runs to 205 residues: Recombination protein RecR (205 aa).

The C4-type zinc-finger motif lies at 60–75 (CKVCHNISDTETCQIC). Residues 83–178 (SMVCVVENIR…KLSVLARGVS (96 aa)) enclose the Toprim domain.

This sequence belongs to the RecR family.

In terms of biological role, may play a role in DNA repair. It seems to be involved in an RecBC-independent recombinational process of DNA repair. It may act with RecF and RecO. The chain is Recombination protein RecR from Bacteroides fragilis (strain ATCC 25285 / DSM 2151 / CCUG 4856 / JCM 11019 / LMG 10263 / NCTC 9343 / Onslow / VPI 2553 / EN-2).